The following is a 313-amino-acid chain: Porphobilinogen deaminase (313 aa).

Position 242 is an S-(dipyrrolylmethanemethyl)cysteine (Cys-242).

The protein belongs to the HMBS family. Monomer. Dipyrromethane serves as cofactor.

The catalysed reaction is 4 porphobilinogen + H2O = hydroxymethylbilane + 4 NH4(+). It participates in porphyrin-containing compound metabolism; protoporphyrin-IX biosynthesis; coproporphyrinogen-III from 5-aminolevulinate: step 2/4. In terms of biological role, tetrapolymerization of the monopyrrole PBG into the hydroxymethylbilane pre-uroporphyrinogen in several discrete steps. The chain is Porphobilinogen deaminase from Yersinia pseudotuberculosis serotype O:3 (strain YPIII).